The following is a 1200-amino-acid chain: Chromosome partition protein Smc (1200 aa).

An ATP-binding site is contributed by 33–40 (PNGSGKSN). The disordered stretch occupies residues 90–109 (GENLSEPGANHNGNGNGAKI). Residues 202–528 (EVQDREERCQ…AASQAQQEVQ (327 aa)) adopt a coiled-coil conformation. Residues 542–656 (PGVCGLVAQL…VFDTLVNARN (115 aa)) enclose the SMC hinge domain. Positions 692 to 1046 (TMVSEDTAEV…ERTELLLRIE (355 aa)) form a coiled coil.

The protein belongs to the SMC family. Homodimer.

The protein resides in the cytoplasm. Its function is as follows. Required for chromosome condensation and partitioning. This Synechocystis sp. (strain ATCC 27184 / PCC 6803 / Kazusa) protein is Chromosome partition protein Smc.